Consider the following 1020-residue polypeptide: DNA-directed RNA polymerase 2, chloroplastic/mitochondrial (1020 aa).

The tract at residues 314-336 (KKQKAEKDKQKEDGEHVTQEQEK) is disordered. Residues aspartate 721, lysine 796, and aspartate 953 contribute to the active site.

It belongs to the phage and mitochondrial RNA polymerase family. As to expression, the highest levels of expression are detected in the mature leaves. The level of expression is lowest in the cotyledons.

It localises to the plastid. The protein resides in the chloroplast. It is found in the mitochondrion. It carries out the reaction RNA(n) + a ribonucleoside 5'-triphosphate = RNA(n+1) + diphosphate. DNA-dependent RNA polymerase catalyzes the transcription of DNA into RNA using the four ribonucleoside triphosphates as substrates. This is DNA-directed RNA polymerase 2, chloroplastic/mitochondrial (RPOT2) from Nicotiana sylvestris (Wood tobacco).